Consider the following 470-residue polypeptide: Protein escargot (470 aa).

The interval 271-309 is disordered; it reads LNLNTSQPGEQAAAKTGDMSPETMPNASAKKDKNQPPRY. C2H2-type zinc fingers lie at residues 309–331, 344–366, 370–392, and 398–420; these read YQCP…QQFH, FSCK…IRTH, CKCN…IRTH, and FSCQ…LQTH. The segment at 426 to 449 adopts a C2H2-type 5; atypical zinc-finger fold; it reads YSCTSCSKTFSRMSLLTKHSEGGC. A disordered region spans residues 448–470; that stretch reads GCPGGSAGSSSSSELNYAGYAEP.

It belongs to the snail C2H2-type zinc-finger protein family. In terms of tissue distribution, expression is complex and dynamic. In early embryogenesis, expression begins on the dorsal side of the embryo. Expressed in a pattern of longitudinal stripes early in germband elongation. Later in embryogenesis, expression is in cells that correspond to the wing, haltere, leg and genital imaginal disks and the abdominal histoblasts. In the embryonic leg disk, expression is restricted to imaginal cells. Also expressed in the central nervous system (CNS), tracheae and head of stage 14 embryos. CNS and tracheal expression decays during later stages, though head expression persists until late in embryogenesis. In third instar larvae, expression is seen in the brain and in regions of many imaginal tissues including the eye-antennal, wing, leg and haltere disks. Expressed in embryonic, larval and adult male germline stem cells and in the somatic cells of the embryonic gonads.

The protein localises to the nucleus. Functionally, transcription factor that can both stimulate and repress transcription. Binds to the consensus DNA sequence 5'-A/GCAGGTG-3'. Regulates cell motility and adhesion during tracheal morphogenesis by stimulating transcription of the DE-cadherin gene shg at branch tips, thereby promoting tracheal tube fusion. Maintains diploidy in imaginal cells by inhibiting the transcription of genes required for endoreplication. Required for development of the genital disk and acts as an intrinsic determinant of wing cell fate. The somatic protein is required for maintenance of male germ cells. Acts with other members of the snail protein family to control embryonic central nervous system development. The protein is Protein escargot (esg) of Drosophila melanogaster (Fruit fly).